The following is a 396-amino-acid chain: Large ribosomal subunit protein uL24m (396 aa).

Residues 374-396 (QLSLGGGQEDAATTTSPEQPKVV) are disordered. Polar residues predominate over residues 384 to 396 (AATTTSPEQPKVV).

Belongs to the universal ribosomal protein uL24 family. As to quaternary structure, component of the mitochondrial large ribosomal subunit (mt-LSU). Mature N.crassa 74S mitochondrial ribosomes consist of a small (37S) and a large (54S) subunit. The 37S small subunit contains a 16S ribosomal RNA (16S mt-rRNA) and 32 different proteins. The 54S large subunit contains a 23S rRNA (23S mt-rRNA) and 42 different proteins. uL24m forms the wall of the exit tunnel.

The protein localises to the mitochondrion. In terms of biological role, component of the mitochondrial ribosome (mitoribosome), a dedicated translation machinery responsible for the synthesis of mitochondrial genome-encoded proteins, including at least some of the essential transmembrane subunits of the mitochondrial respiratory chain. The mitoribosomes are attached to the mitochondrial inner membrane and translation products are cotranslationally integrated into the membrane. The polypeptide is Large ribosomal subunit protein uL24m (mrpl40) (Neurospora crassa (strain ATCC 24698 / 74-OR23-1A / CBS 708.71 / DSM 1257 / FGSC 987)).